Reading from the N-terminus, the 211-residue chain is Large ribosomal subunit protein uL3 (211 aa).

The protein belongs to the universal ribosomal protein uL3 family. As to quaternary structure, part of the 50S ribosomal subunit. Forms a cluster with proteins L14 and L19.

In terms of biological role, one of the primary rRNA binding proteins, it binds directly near the 3'-end of the 23S rRNA, where it nucleates assembly of the 50S subunit. The polypeptide is Large ribosomal subunit protein uL3 (Akkermansia muciniphila (strain ATCC BAA-835 / DSM 22959 / JCM 33894 / BCRC 81048 / CCUG 64013 / CIP 107961 / Muc)).